A 490-amino-acid chain; its full sequence is Glucose-6-phosphate 1-dehydrogenase (490 aa).

Residues arginine 49, 91 to 92 (DV), and lysine 146 contribute to the NADP(+) site. Histidine 176, lysine 180, glutamate 214, and aspartate 233 together coordinate substrate. Catalysis depends on histidine 238, which acts as the Proton acceptor. Substrate contacts are provided by lysine 338 and lysine 343.

It belongs to the glucose-6-phosphate dehydrogenase family.

It carries out the reaction D-glucose 6-phosphate + NADP(+) = 6-phospho-D-glucono-1,5-lactone + NADPH + H(+). Its pathway is carbohydrate degradation; pentose phosphate pathway; D-ribulose 5-phosphate from D-glucose 6-phosphate (oxidative stage): step 1/3. Its function is as follows. Catalyzes the oxidation of glucose 6-phosphate to 6-phosphogluconolactone. The chain is Glucose-6-phosphate 1-dehydrogenase from Buchnera aphidicola subsp. Schizaphis graminum (strain Sg).